The following is a 210-amino-acid chain: dITP/XTP pyrophosphatase (210 aa).

13–18 (THNPGK) contributes to the substrate binding site. Residues Asp-45 and Asp-74 each coordinate Mg(2+). The Proton acceptor role is filled by Asp-74. Substrate-binding positions include Ser-75, 160–163 (FGYD), Lys-183, and 195–196 (HR).

This sequence belongs to the HAM1 NTPase family. As to quaternary structure, homodimer. The cofactor is Mg(2+).

The catalysed reaction is XTP + H2O = XMP + diphosphate + H(+). The enzyme catalyses dITP + H2O = dIMP + diphosphate + H(+). It catalyses the reaction ITP + H2O = IMP + diphosphate + H(+). Pyrophosphatase that catalyzes the hydrolysis of nucleoside triphosphates to their monophosphate derivatives, with a high preference for the non-canonical purine nucleotides XTP (xanthosine triphosphate), dITP (deoxyinosine triphosphate) and ITP. Seems to function as a house-cleaning enzyme that removes non-canonical purine nucleotides from the nucleotide pool, thus preventing their incorporation into DNA/RNA and avoiding chromosomal lesions. In Rhodopseudomonas palustris (strain ATCC BAA-98 / CGA009), this protein is dITP/XTP pyrophosphatase.